A 129-amino-acid polypeptide reads, in one-letter code: Glycine cleavage system H protein (129 aa).

The Lipoyl-binding domain maps to 24–106 (IATIGITEFA…YGEGWFLKVR (83 aa)). Lys-65 is modified (N6-lipoyllysine).

Belongs to the GcvH family. As to quaternary structure, the glycine cleavage system is composed of four proteins: P, T, L and H. (R)-lipoate serves as cofactor.

The glycine cleavage system catalyzes the degradation of glycine. The H protein shuttles the methylamine group of glycine from the P protein to the T protein. The chain is Glycine cleavage system H protein from Nostoc punctiforme (strain ATCC 29133 / PCC 73102).